The following is a 166-amino-acid chain: Nucleotide-binding protein Acid_3194 (166 aa).

Belongs to the YajQ family.

Its function is as follows. Nucleotide-binding protein. This chain is Nucleotide-binding protein Acid_3194, found in Solibacter usitatus (strain Ellin6076).